A 444-amino-acid polypeptide reads, in one-letter code: tRNA modification GTPase MnmE (444 aa).

(6S)-5-formyl-5,6,7,8-tetrahydrofolate is bound by residues R22, E79, and R118. Residues 214-368 (GMQVVLAGPP…LRDHLKSVMG (155 aa)) enclose the TrmE-type G domain. N224 provides a ligand contact to K(+). Residues 224–229 (NAGKSS), 243–249 (TEVPGTT), and 268–271 (DTAG) contribute to the GTP site. S228 serves as a coordination point for Mg(2+). K(+) contacts are provided by T243, V245, and T248. Residue T249 coordinates Mg(2+). K444 lines the (6S)-5-formyl-5,6,7,8-tetrahydrofolate pocket.

The protein belongs to the TRAFAC class TrmE-Era-EngA-EngB-Septin-like GTPase superfamily. TrmE GTPase family. As to quaternary structure, homodimer. Heterotetramer of two MnmE and two MnmG subunits. The cofactor is K(+).

The protein localises to the cytoplasm. Functionally, exhibits a very high intrinsic GTPase hydrolysis rate. Involved in the addition of a carboxymethylaminomethyl (cmnm) group at the wobble position (U34) of certain tRNAs, forming tRNA-cmnm(5)s(2)U34. This Alkalilimnicola ehrlichii (strain ATCC BAA-1101 / DSM 17681 / MLHE-1) protein is tRNA modification GTPase MnmE.